Here is a 427-residue protein sequence, read N- to C-terminus: Peptidase B (427 aa).

Positions 195 and 200 each coordinate Mn(2+). Lys-207 is a catalytic residue. Residues Asp-218, Asp-277, and Glu-279 each contribute to the Mn(2+) site. The active site involves Arg-281.

This sequence belongs to the peptidase M17 family. As to quaternary structure, homohexamer. Mn(2+) is required as a cofactor.

The protein resides in the cytoplasm. It carries out the reaction Release of an N-terminal amino acid, Xaa, from a peptide or arylamide. Xaa is preferably Glu or Asp but may be other amino acids, including Leu, Met, His, Cys and Gln.. Functionally, probably plays an important role in intracellular peptide degradation. In Shigella flexneri, this protein is Peptidase B.